The following is a 159-amino-acid chain: uncharacterized protein (159 aa).

The next 3 helical transmembrane spans lie at 10–30 (FLSM…SLFF), 52–72 (MLIL…VILL), and 96–116 (LTLI…PFVT).

The protein localises to the membrane. This is an uncharacterized protein from Escherichia coli (strain K12).